We begin with the raw amino-acid sequence, 139 residues long: Large ribosomal subunit protein uL16 (139 aa).

A compositionally biased stretch (basic residues) spans 1-16; the sequence is MLIPKRTKYRKQHRPV. The disordered stretch occupies residues 1–22; sequence MLIPKRTKYRKQHRPVRSGMSK.

The protein belongs to the universal ribosomal protein uL16 family. In terms of assembly, part of the 50S ribosomal subunit.

In terms of biological role, binds 23S rRNA and is also seen to make contacts with the A and possibly P site tRNAs. In Bifidobacterium longum subsp. infantis (strain ATCC 15697 / DSM 20088 / JCM 1222 / NCTC 11817 / S12), this protein is Large ribosomal subunit protein uL16.